The sequence spans 454 residues: Nitrogen assimilation regulatory protein NtrX (454 aa).

One can recognise a Response regulatory domain in the interval 4–120 (DILIVDDEPD…RLVVITERAL (117 aa)). Asp53 is subject to 4-aspartylphosphate. A Sigma-54 factor interaction domain is found at 141-367 (MVGRSSVIQQ…LRNNVERLLI (227 aa)). Residues 169-176 (GPSGSGKE) and 229-238 (AHGGTLFLDE) each bind ATP. Residues 430 to 449 (ISRTAEFVGMERSALHRKLK) constitute a DNA-binding region (H-T-H motif).

Functionally, member of the two-component regulatory system NtrY/NtrX involved in the activation of nitrogen assimilatory genes such as GlnA. NtrX is probably phosphorylated by NtrY and interacts with sigma-54. The chain is Nitrogen assimilation regulatory protein NtrX (ntrX) from Azorhizobium caulinodans (strain ATCC 43989 / DSM 5975 / JCM 20966 / LMG 6465 / NBRC 14845 / NCIMB 13405 / ORS 571).